The chain runs to 65 residues: Translational regulator CsrA (65 aa).

It belongs to the CsrA/RsmA family. Homodimer; the beta-strands of each monomer intercalate to form a hydrophobic core, while the alpha-helices form wings that extend away from the core.

It localises to the cytoplasm. A translational regulator that binds mRNA to regulate translation initiation and/or mRNA stability. Usually binds in the 5'-UTR at or near the Shine-Dalgarno sequence preventing ribosome-binding, thus repressing translation. Its main target seems to be the major flagellin gene, while its function is anatagonized by FliW. The chain is Translational regulator CsrA from Bordetella petrii (strain ATCC BAA-461 / DSM 12804 / CCUG 43448).